Reading from the N-terminus, the 660-residue chain is Acetyl-coenzyme A synthetase (660 aa).

Residues 197-200 (RGGK) and T317 each bind CoA. ATP-binding positions include 397–399 (GEP), 421–426 (DTFWQT), D512, and R528. CoA is bound at residue S536. ATP is bound at residue R539. V550 and V555 together coordinate Mg(2+). K625 is subject to N6-acetyllysine.

It belongs to the ATP-dependent AMP-binding enzyme family. Mg(2+) is required as a cofactor. In terms of processing, acetylated. Deacetylation by the SIR2-homolog deacetylase activates the enzyme.

It catalyses the reaction acetate + ATP + CoA = acetyl-CoA + AMP + diphosphate. In terms of biological role, catalyzes the conversion of acetate into acetyl-CoA (AcCoA), an essential intermediate at the junction of anabolic and catabolic pathways. AcsA undergoes a two-step reaction. In the first half reaction, AcsA combines acetate with ATP to form acetyl-adenylate (AcAMP) intermediate. In the second half reaction, it can then transfer the acetyl group from AcAMP to the sulfhydryl group of CoA, forming the product AcCoA. The polypeptide is Acetyl-coenzyme A synthetase (Cupriavidus taiwanensis (strain DSM 17343 / BCRC 17206 / CCUG 44338 / CIP 107171 / LMG 19424 / R1) (Ralstonia taiwanensis (strain LMG 19424))).